A 529-amino-acid chain; its full sequence is BAR/IMD domain-containing adapter protein 2-like 2 (529 aa).

In terms of domain architecture, IMD spans 1–239; sequence MAPEMDQFYR…HSPGLLGPAL (239 aa). 2 disordered regions span residues 221 to 327 and 403 to 510; these read EASR…GGAR and TSMS…TNPF. S231, S272, and S302 each carry phosphoserine. The span at 299–313 shows a compositional bias: low complexity; it reads SASSLYSGSAQSSRS. The SH3 domain occupies 324 to 387; the sequence is GGARRVRALV…PEAYVKALEE (64 aa). 2 stretches are compositionally biased toward low complexity: residues 403 to 413 and 452 to 462; these read TSMSPMTPMNP and RSRTPSRVPSR. The segment covering 463 to 472 has biased composition (pro residues); sequence APSPAPPPLP. A phosphoserine mark is found at S478 and S481.

Expressed in the epithelial layer of the intestine (at protein level).

It is found in the cell membrane. The protein localises to the cell junction. It localises to the cytoplasmic vesicle membrane. Its function is as follows. Phosphoinositides-binding protein that induces the formation of planar or gently curved membrane structures. Binds to phosphoinositides, including to phosphatidylinositol 4,5-bisphosphate (PtdIns(4,5)P2) headgroups. There seems to be no clear preference for a specific phosphoinositide. This chain is BAR/IMD domain-containing adapter protein 2-like 2 (BAIAP2L2), found in Homo sapiens (Human).